The sequence spans 483 residues: Regulatory protein ViaA (483 aa).

Belongs to the ViaA family. As to quaternary structure, homodimer. Interacts with RavA.

It localises to the cytoplasm. Functionally, component of the RavA-ViaA chaperone complex, which may act on the membrane to optimize the function of some of the respiratory chains. ViaA stimulates the ATPase activity of RavA. This chain is Regulatory protein ViaA, found in Shigella flexneri serotype 5b (strain 8401).